A 244-amino-acid chain; its full sequence is MLQCLFFVMDPVFLSEITVELVKHSASDSDVVFSARVSTLGSFVAVTDCLSNRDIGLITFLMRERHGSPFEHSHMTFRISAPIFVFREFMRHRIASYNEESGRYKNLDPVFYIPDEKRKLVQIGAPGAYKFEEGTSEQYGLLIEEMKELSLAAYDTYKRLLACGIAREVARMILPLNLYSTMYVTINARSLMNFLSVRTSRANSAFHSYPQREIELCADRIEEIWKGLMPETHAAFEKQGRVAP.

A ThyX domain is found at 17–239 (ITVELVKHSA…PETHAAFEKQ (223 aa)). Residues Ser68, 91-93 (RHR), and Glu99 each bind FAD. DUMP is bound by residues 88–91 (EFMR), 99–103 (EESGR), and Arg171. The short motif at 91-101 (RHRIASYNEES) is the ThyX motif element. FAD is bound by residues 187–189 (NAR) and Asn193. Arg198 is a binding site for dUMP. The active-site Involved in ionization of N3 of dUMP, leading to its activation is the Arg198.

Belongs to the thymidylate synthase ThyX family. Homotetramer. Requires FAD as cofactor.

It carries out the reaction dUMP + (6R)-5,10-methylene-5,6,7,8-tetrahydrofolate + NADPH + H(+) = dTMP + (6S)-5,6,7,8-tetrahydrofolate + NADP(+). The protein operates within pyrimidine metabolism; dTTP biosynthesis. In terms of biological role, catalyzes the reductive methylation of 2'-deoxyuridine-5'-monophosphate (dUMP) to 2'-deoxythymidine-5'-monophosphate (dTMP) while utilizing 5,10-methylenetetrahydrofolate (mTHF) as the methyl donor, and NADPH and FADH(2) as the reductant. The protein is Flavin-dependent thymidylate synthase of Tropheryma whipplei (strain Twist) (Whipple's bacillus).